Here is a 116-residue protein sequence, read N- to C-terminus: Large ribosomal subunit protein bL17 (116 aa).

The protein belongs to the bacterial ribosomal protein bL17 family. In terms of assembly, part of the 50S ribosomal subunit. Contacts protein L32.

In Helicobacter acinonychis (strain Sheeba), this protein is Large ribosomal subunit protein bL17.